The sequence spans 818 residues: Catenin beta (818 aa).

2 stretches are compositionally biased toward polar residues: residues 1 to 21 (METY…TPQG) and 48 to 66 (GDSG…SVSS). Disordered regions lie at residues 1-24 (METY…GQYM) and 48-71 (GDSG…HGLD). 7 ARM repeats span residues 164–203 (NYQD…QLSK), 248–287 (RQGL…NLLL), 412–451 (DAAT…NLTC), 454–495 (QRNK…HLTS), 501–541 (EMAQ…NLAL), 543–582 (PANH…NTSA), and 648–687 (KEGA…RMSE). Positions 732–818 (QGFRGYQGSG…QMAAWFDTDL (87 aa)) are disordered.

Belongs to the beta-catenin family.

It is found in the cytoplasm. Its subcellular location is the cytoskeleton. Functionally, binds to the cytoplasmic domain of the cell-cell adhesion molecule E-cadherin, and perhaps to other (membrane) proteins. The association of catenins to cadherins produces a complex which is linked to the actin filament network, and which seems to be of primary importance for cadherins cell-adhesion properties. This is Catenin beta from Urechis caupo (Innkeeper worm).